The primary structure comprises 898 residues: Alanine--tRNA ligase (898 aa).

H582, H586, C685, and H689 together coordinate Zn(2+).

This sequence belongs to the class-II aminoacyl-tRNA synthetase family. It depends on Zn(2+) as a cofactor.

It is found in the cytoplasm. The catalysed reaction is tRNA(Ala) + L-alanine + ATP = L-alanyl-tRNA(Ala) + AMP + diphosphate. In terms of biological role, catalyzes the attachment of alanine to tRNA(Ala) in a two-step reaction: alanine is first activated by ATP to form Ala-AMP and then transferred to the acceptor end of tRNA(Ala). Also edits incorrectly charged Ser-tRNA(Ala) and Gly-tRNA(Ala) via its editing domain. The protein is Alanine--tRNA ligase of Mycolicibacterium vanbaalenii (strain DSM 7251 / JCM 13017 / BCRC 16820 / KCTC 9966 / NRRL B-24157 / PYR-1) (Mycobacterium vanbaalenii).